The sequence spans 354 residues: Chorismate synthase (354 aa).

NADP(+) is bound at residue Arg-48. Residues 125-127, 239-240, Gly-280, 295-299, and Arg-321 each bind FMN; these read RSS, NA, and KPVAT.

It belongs to the chorismate synthase family. As to quaternary structure, homotetramer. FMNH2 serves as cofactor.

The catalysed reaction is 5-O-(1-carboxyvinyl)-3-phosphoshikimate = chorismate + phosphate. Its pathway is metabolic intermediate biosynthesis; chorismate biosynthesis; chorismate from D-erythrose 4-phosphate and phosphoenolpyruvate: step 7/7. Functionally, catalyzes the anti-1,4-elimination of the C-3 phosphate and the C-6 proR hydrogen from 5-enolpyruvylshikimate-3-phosphate (EPSP) to yield chorismate, which is the branch point compound that serves as the starting substrate for the three terminal pathways of aromatic amino acid biosynthesis. This reaction introduces a second double bond into the aromatic ring system. This is Chorismate synthase from Christiangramia forsetii (strain DSM 17595 / CGMCC 1.15422 / KT0803) (Gramella forsetii).